A 440-amino-acid chain; its full sequence is Golgi-associated RAB2 interactor protein 2 (440 aa).

This sequence belongs to the GARIN family. Interacts with CALM1. Expressed in testis (at protein level).

It localises to the cell projection. The protein localises to the cilium. It is found in the flagellum. Its function is as follows. Seems to play a role in sperm motility. The polypeptide is Golgi-associated RAB2 interactor protein 2 (Mus musculus (Mouse)).